The sequence spans 314 residues: Inosine-uridine preferring nucleoside hydrolase (314 aa).

Residue aspartate 10 coordinates Ca(2+). Substrate is bound at residue aspartate 14. The Ca(2+) site is built by aspartate 15 and threonine 126. 3 residues coordinate substrate: asparagine 160, glutamate 166, and asparagine 168. Histidine 240 functions as the Proton donor in the catalytic mechanism. Aspartate 241 provides a ligand contact to Ca(2+).

It belongs to the IUNH family. In terms of assembly, homotetramer. It depends on Ca(2+) as a cofactor.

It catalyses the reaction inosine + H2O = hypoxanthine + D-ribose. The catalysed reaction is uridine + H2O = D-ribose + uracil. The protein operates within purine metabolism; purine nucleoside salvage. Is potently inhibited by immucillin A and immucillin ACAP, which are transition state inhibitors. In terms of biological role, catalyzes the hydrolysis of the N-glycosidic bond of all of the commonly occurring purine and pyrimidine nucleosides into ribose and the associated base, but has a preference for inosine and uridine as substrates. Likely functions in purine salvage from the host, a fundamental pathway since protozoan parasites such as L.major are incapable of de novo purine biosynthesis. The protein is Inosine-uridine preferring nucleoside hydrolase (NSNH) of Leishmania major.